The primary structure comprises 154 residues: Anaerobic ribonucleoside-triphosphate reductase-activating protein (154 aa).

[4Fe-4S] cluster contacts are provided by Cys26, Cys30, and Cys33. S-adenosyl-L-methionine contacts are provided by residues 32–34 (GCY) and Gly74.

The protein belongs to the organic radical-activating enzymes family. In terms of assembly, forms a tetramer composed of two NrdD and two NrdG subunits. [4Fe-4S] cluster is required as a cofactor.

It is found in the cytoplasm. It catalyses the reaction glycyl-[protein] + reduced [flavodoxin] + S-adenosyl-L-methionine = glycin-2-yl radical-[protein] + semiquinone [flavodoxin] + 5'-deoxyadenosine + L-methionine + H(+). Its function is as follows. Activation of anaerobic ribonucleoside-triphosphate reductase under anaerobic conditions by generation of an organic free radical, using S-adenosylmethionine and reduced flavodoxin as cosubstrates to produce 5'-deoxy-adenosine. The chain is Anaerobic ribonucleoside-triphosphate reductase-activating protein (nrdG) from Salmonella typhi.